The primary structure comprises 488 residues: Protein nucleotidyltransferase YdiU (488 aa).

ATP-binding residues include G91, G93, R94, K114, D126, G127, R177, and R184. Residue D253 is the Proton acceptor of the active site. Mg(2+) is bound by residues N254 and D263. ATP is bound at residue D263.

The protein belongs to the SELO family. The cofactor is Mg(2+). Requires Mn(2+) as cofactor.

The catalysed reaction is L-seryl-[protein] + ATP = 3-O-(5'-adenylyl)-L-seryl-[protein] + diphosphate. It catalyses the reaction L-threonyl-[protein] + ATP = 3-O-(5'-adenylyl)-L-threonyl-[protein] + diphosphate. It carries out the reaction L-tyrosyl-[protein] + ATP = O-(5'-adenylyl)-L-tyrosyl-[protein] + diphosphate. The enzyme catalyses L-histidyl-[protein] + UTP = N(tele)-(5'-uridylyl)-L-histidyl-[protein] + diphosphate. The catalysed reaction is L-seryl-[protein] + UTP = O-(5'-uridylyl)-L-seryl-[protein] + diphosphate. It catalyses the reaction L-tyrosyl-[protein] + UTP = O-(5'-uridylyl)-L-tyrosyl-[protein] + diphosphate. Its function is as follows. Nucleotidyltransferase involved in the post-translational modification of proteins. It can catalyze the addition of adenosine monophosphate (AMP) or uridine monophosphate (UMP) to a protein, resulting in modifications known as AMPylation and UMPylation. This is Protein nucleotidyltransferase YdiU from Bacillus cereus (strain ATCC 14579 / DSM 31 / CCUG 7414 / JCM 2152 / NBRC 15305 / NCIMB 9373 / NCTC 2599 / NRRL B-3711).